Reading from the N-terminus, the 295-residue chain is UDP-N-acetylenolpyruvoylglucosamine reductase (295 aa).

The 168-residue stretch at 27–194 folds into the FAD-binding PCMH-type domain; that stretch reads GVGGEAEVWF…TRVRLKLRRS (168 aa). Arg-174 is a catalytic residue. The Proton donor role is filled by Cys-221. Glu-287 is an active-site residue.

It belongs to the MurB family. Requires FAD as cofactor.

Its subcellular location is the cytoplasm. The catalysed reaction is UDP-N-acetyl-alpha-D-muramate + NADP(+) = UDP-N-acetyl-3-O-(1-carboxyvinyl)-alpha-D-glucosamine + NADPH + H(+). Its pathway is cell wall biogenesis; peptidoglycan biosynthesis. Cell wall formation. The polypeptide is UDP-N-acetylenolpyruvoylglucosamine reductase (Deinococcus geothermalis (strain DSM 11300 / CIP 105573 / AG-3a)).